A 209-amino-acid chain; its full sequence is Small ribosomal subunit protein uS5 (209 aa).

Residues 48 to 111 (LEDEVLDINM…DAAKLNITYI (64 aa)) form the S5 DRBM domain.

This sequence belongs to the universal ribosomal protein uS5 family. As to quaternary structure, part of the 30S ribosomal subunit. Contacts protein S4.

Functionally, with S4 and S12 plays an important role in translational accuracy. The protein is Small ribosomal subunit protein uS5 of Methanosarcina acetivorans (strain ATCC 35395 / DSM 2834 / JCM 12185 / C2A).